A 169-amino-acid chain; its full sequence is Transcription antitermination protein NusB (169 aa).

The interval 1 to 23 is disordered; that stretch reads MADSKKPAIKKPVPKGDRKANRR.

It belongs to the NusB family.

Involved in transcription antitermination. Required for transcription of ribosomal RNA (rRNA) genes. Binds specifically to the boxA antiterminator sequence of the ribosomal RNA (rrn) operons. In Rhodopseudomonas palustris (strain HaA2), this protein is Transcription antitermination protein NusB.